The chain runs to 677 residues: Methionine--tRNA ligase (677 aa).

Positions 15-25 (PYANGSIHLGH) match the 'HIGH' region motif. Positions 146, 149, 159, and 162 each coordinate Zn(2+). A 'KMSKS' region motif is present at residues 333 to 337 (KMSKS). K336 is an ATP binding site. The tRNA-binding domain occupies 575-677 (DFAKIDLRVA…DGAKPGQQVK (103 aa)).

Belongs to the class-I aminoacyl-tRNA synthetase family. MetG type 1 subfamily. As to quaternary structure, homodimer. Zn(2+) is required as a cofactor.

Its subcellular location is the cytoplasm. It catalyses the reaction tRNA(Met) + L-methionine + ATP = L-methionyl-tRNA(Met) + AMP + diphosphate. Its function is as follows. Is required not only for elongation of protein synthesis but also for the initiation of all mRNA translation through initiator tRNA(fMet) aminoacylation. The protein is Methionine--tRNA ligase of Salmonella choleraesuis (strain SC-B67).